The chain runs to 720 residues: DNA ligase (720 aa).

NAD(+) is bound by residues 60–64 (DYDYD), 109–110 (SL), and glutamate 140. Lysine 142 functions as the N6-AMP-lysine intermediate in the catalytic mechanism. The NAD(+) site is built by arginine 163 and glutamate 201. The tract at residues 220-239 (GLPPFANPRNAAAGSIRQKD) is disordered. Positions 320 and 344 each coordinate NAD(+). Residues cysteine 438, cysteine 441, cysteine 456, and cysteine 461 each coordinate Zn(2+). One can recognise a BRCT domain in the interval 619 to 709 (KVADVLKGKT…VDLEKIKKED (91 aa)).

This sequence belongs to the NAD-dependent DNA ligase family. LigA subfamily. Requires Mn(2+) as cofactor. Mg(2+) is required as a cofactor.

It carries out the reaction NAD(+) + (deoxyribonucleotide)n-3'-hydroxyl + 5'-phospho-(deoxyribonucleotide)m = (deoxyribonucleotide)n+m + AMP + beta-nicotinamide D-nucleotide.. In terms of biological role, DNA ligase that catalyzes the formation of phosphodiester linkages between 5'-phosphoryl and 3'-hydroxyl groups in double-stranded DNA using NAD as a coenzyme and as the energy source for the reaction. It is essential for DNA replication and repair of damaged DNA. The polypeptide is DNA ligase (Aquifex aeolicus (strain VF5)).